We begin with the raw amino-acid sequence, 148 residues long: NTR domain-containing protein (148 aa).

A signal peptide spans 1–26; that stretch reads MVCRFSYVQVVLILVVLSVIISWANA. Disulfide bonds link Cys27/Cys96, Cys29/Cys122, and Cys40/Cys146. In terms of domain architecture, NTR spans 27 to 146; sequence CSCFPPDETR…LQLFNDPQWC (120 aa).

In terms of tissue distribution, prismatic layer of shell (at protein level). Expressed primarily in the mantle with highest level in the mantle edge and lower level in the mantle pallium.

Its subcellular location is the secreted. In Margaritifera margaritifera (Freshwater pearl mussel), this protein is NTR domain-containing protein.